The primary structure comprises 1035 residues: Translation initiation factor IF-2 (1035 aa).

Positions 56–66 (KDDKSNTDDNK) are enriched in basic and acidic residues. 2 disordered regions span residues 56–80 (KDDKSNTDDNKTASAHSVAQHSSEA) and 114–402 (ANDA…VIKN). Positions 68–78 (ASAHSVAQHSS) are enriched in polar residues. 2 stretches are compositionally biased toward basic and acidic residues: residues 114–137 (ANDAKSQKKPEEKRKKNDFVRVET) and 146–200 (LVRE…EIKD). Polar residues predominate over residues 219–228 (DSATNVNLNE). Over residues 229–238 (SIDKDKKTND) the composition is skewed to basic and acidic residues. Over residues 239–253 (NRQVSTDNSAVNNEE) the composition is skewed to polar residues. Residues 259 to 315 (LNKKDMDKKNNNKKNEAKKNAEKKNEAKKNEKNDNKGGNAKKNEHRSPDMKKNDSNR) are compositionally biased toward basic and acidic residues. Residues 316–325 (PQDANKQNSK) show a composition bias toward polar residues. Composition is skewed to basic and acidic residues over residues 327–347 (AADKNREEGRTGSKKSLEIPK) and 354–385 (QKEEFNSQRAERREYNKDAEKDSKRELRKEQP). A tr-type G domain is found at 537 to 706 (PRPPVVVVMG…LLAADMLELK (170 aa)). Residues 546-553 (GHVDHGKT) are G1. 546–553 (GHVDHGKT) is a binding site for GTP. The interval 571–575 (GITQH) is G2. The G3 stretch occupies residues 592–595 (DTPG). Residues 592-596 (DTPGH) and 646-649 (NKID) each bind GTP. Residues 646-649 (NKID) form a G4 region. The G5 stretch occupies residues 682-684 (SAK).

It belongs to the TRAFAC class translation factor GTPase superfamily. Classic translation factor GTPase family. IF-2 subfamily.

It localises to the cytoplasm. In terms of biological role, one of the essential components for the initiation of protein synthesis. Protects formylmethionyl-tRNA from spontaneous hydrolysis and promotes its binding to the 30S ribosomal subunits. Also involved in the hydrolysis of GTP during the formation of the 70S ribosomal complex. In Acetivibrio thermocellus (strain ATCC 27405 / DSM 1237 / JCM 9322 / NBRC 103400 / NCIMB 10682 / NRRL B-4536 / VPI 7372) (Clostridium thermocellum), this protein is Translation initiation factor IF-2.